A 316-amino-acid chain; its full sequence is Arabinooligosaccharides transport system permease protein AraP (316 aa).

The next 7 helical transmembrane spans lie at 32–52 (VVPY…SFYP), 94–114 (TYMI…AVLL), 128–148 (ALFL…RLMF), 178–198 (MFLM…LYFL), 224–244 (FYVT…ISVI), 254–274 (FVFW…GYLY), and 283–303 (MGFG…ISIT). Residues 89 to 304 (LQNTTTYMIL…LIIFVISITQ (216 aa)) enclose the ABC transmembrane type-1 domain.

Belongs to the binding-protein-dependent transport system permease family. MalFG subfamily. As to quaternary structure, the complex is composed of two ATP-binding proteins (MsmX), two transmembrane proteins (AraP and AraQ) and a solute-binding protein (AraN).

The protein localises to the cell membrane. Functionally, part of the ABC transporter complex AraNPQ involved in the uptake of arabinooligosaccharides. Responsible for the translocation of the substrate across the membrane. This Halalkalibacterium halodurans (strain ATCC BAA-125 / DSM 18197 / FERM 7344 / JCM 9153 / C-125) (Bacillus halodurans) protein is Arabinooligosaccharides transport system permease protein AraP (araP).